The chain runs to 95 residues: Aspartyl/glutamyl-tRNA(Asn/Gln) amidotransferase subunit C (95 aa).

The protein belongs to the GatC family. Heterotrimer of A, B and C subunits.

It catalyses the reaction L-glutamyl-tRNA(Gln) + L-glutamine + ATP + H2O = L-glutaminyl-tRNA(Gln) + L-glutamate + ADP + phosphate + H(+). The catalysed reaction is L-aspartyl-tRNA(Asn) + L-glutamine + ATP + H2O = L-asparaginyl-tRNA(Asn) + L-glutamate + ADP + phosphate + 2 H(+). In terms of biological role, allows the formation of correctly charged Asn-tRNA(Asn) or Gln-tRNA(Gln) through the transamidation of misacylated Asp-tRNA(Asn) or Glu-tRNA(Gln) in organisms which lack either or both of asparaginyl-tRNA or glutaminyl-tRNA synthetases. The reaction takes place in the presence of glutamine and ATP through an activated phospho-Asp-tRNA(Asn) or phospho-Glu-tRNA(Gln). In Prochlorococcus marinus (strain NATL1A), this protein is Aspartyl/glutamyl-tRNA(Asn/Gln) amidotransferase subunit C.